A 179-amino-acid chain; its full sequence is uncharacterized protein (179 aa).

This is an uncharacterized protein from Methanocaldococcus jannaschii (strain ATCC 43067 / DSM 2661 / JAL-1 / JCM 10045 / NBRC 100440) (Methanococcus jannaschii).